A 476-amino-acid chain; its full sequence is Bifunctional protein HldE (476 aa).

Residues 1–318 (MKLDLTVLEQ…YTALHGDKLA (318 aa)) are ribokinase. An ATP-binding site is contributed by 195 to 198 (NLGE). Residue D264 is part of the active site. Residues 344–476 (MTNGCFDILH…MIDTILDREG (133 aa)) form a cytidylyltransferase region.

This sequence in the N-terminal section; belongs to the carbohydrate kinase PfkB family. The protein in the C-terminal section; belongs to the cytidylyltransferase family. Homodimer.

It carries out the reaction D-glycero-beta-D-manno-heptose 7-phosphate + ATP = D-glycero-beta-D-manno-heptose 1,7-bisphosphate + ADP + H(+). The enzyme catalyses D-glycero-beta-D-manno-heptose 1-phosphate + ATP + H(+) = ADP-D-glycero-beta-D-manno-heptose + diphosphate. It participates in nucleotide-sugar biosynthesis; ADP-L-glycero-beta-D-manno-heptose biosynthesis; ADP-L-glycero-beta-D-manno-heptose from D-glycero-beta-D-manno-heptose 7-phosphate: step 1/4. Its pathway is nucleotide-sugar biosynthesis; ADP-L-glycero-beta-D-manno-heptose biosynthesis; ADP-L-glycero-beta-D-manno-heptose from D-glycero-beta-D-manno-heptose 7-phosphate: step 3/4. Its function is as follows. Catalyzes the phosphorylation of D-glycero-D-manno-heptose 7-phosphate at the C-1 position to selectively form D-glycero-beta-D-manno-heptose-1,7-bisphosphate. In terms of biological role, catalyzes the ADP transfer from ATP to D-glycero-beta-D-manno-heptose 1-phosphate, yielding ADP-D-glycero-beta-D-manno-heptose. This is Bifunctional protein HldE from Chromohalobacter salexigens (strain ATCC BAA-138 / DSM 3043 / CIP 106854 / NCIMB 13768 / 1H11).